We begin with the raw amino-acid sequence, 117 residues long: Large ribosomal subunit protein bL20 (117 aa).

This sequence belongs to the bacterial ribosomal protein bL20 family.

Binds directly to 23S ribosomal RNA and is necessary for the in vitro assembly process of the 50S ribosomal subunit. It is not involved in the protein synthesizing functions of that subunit. The polypeptide is Large ribosomal subunit protein bL20 (Geobacter sulfurreducens (strain ATCC 51573 / DSM 12127 / PCA)).